The chain runs to 75 residues: Protein B (75 aa).

This Dicentrarchus labrax (European seabass) protein is Protein B.